Here is a 34-residue protein sequence, read N- to C-terminus: Phospholipase A2 (34 aa).

His-18 is a catalytic residue. A Ca(2+)-binding site is contributed by Asp-19.

This sequence belongs to the phospholipase A2 family. Group I subfamily. D49 sub-subfamily. Requires Ca(2+) as cofactor. Contains 7 disulfide bonds. In terms of tissue distribution, expressed by the venom gland.

Its subcellular location is the secreted. The catalysed reaction is a 1,2-diacyl-sn-glycero-3-phosphocholine + H2O = a 1-acyl-sn-glycero-3-phosphocholine + a fatty acid + H(+). Functionally, snake venom phospholipase A2 (PLA2) that strongly inhibits platelet aggregation and has a strong anticoagulant activity. PLA2 catalyzes the calcium-dependent hydrolysis of the 2-acyl groups in 3-sn-phosphoglycerides. The protein is Phospholipase A2 of Pseudechis papuanus (Papuan black snake).